Here is a 458-residue protein sequence, read N- to C-terminus: Tetracycline resistance protein (458 aa).

The next 12 helical transmembrane spans lie at 12-33 (HNQV…EMVL), 81-100 (LLLF…FVGH), 111-129 (FIQG…VVVA), 140-162 (AFGL…GGMV), 165-185 (YIHW…VPFL), 201-221 (MAGI…TTSY), 223-240 (FSFL…VQHI), 256-276 (VFFV…AGFV), 297-317 (GIIF…GLLV), 324-344 (YVLT…AFFI), 346-365 (AAPW…LSFT), and 432-451 (MLIL…LNVY).

Belongs to the major facilitator superfamily. TCR/Tet family.

The protein resides in the cell membrane. Functionally, resistance to tetracycline by an active tetracycline efflux. This is an energy-dependent process that decreases the accumulation of the antibiotic in whole cells. This protein functions as a metal-tetracycline/H(+) antiporter. This Bacillus subtilis (strain 168) protein is Tetracycline resistance protein (tetB).